A 113-amino-acid chain; its full sequence is UPF0122 protein M6_Spy0905 (113 aa).

This sequence belongs to the UPF0122 family.

Functionally, might take part in the signal recognition particle (SRP) pathway. This is inferred from the conservation of its genetic proximity to ftsY/ffh. May be a regulatory protein. This Streptococcus pyogenes serotype M6 (strain ATCC BAA-946 / MGAS10394) protein is UPF0122 protein M6_Spy0905.